A 216-amino-acid polypeptide reads, in one-letter code: Probable GTP-binding protein EngB (216 aa).

Residues 26 to 200 (EGIEIAFAGR…RAKLDTWFAP (175 aa)) form the EngB-type G domain. GTP is bound by residues 34–41 (GRSNAGKS), 61–65 (GRTQL), 79–82 (DLPG), 146–149 (TKAD), and 179–181 (YSS). Mg(2+) is bound by residues serine 41 and threonine 63.

The protein belongs to the TRAFAC class TrmE-Era-EngA-EngB-Septin-like GTPase superfamily. EngB GTPase family. It depends on Mg(2+) as a cofactor.

Necessary for normal cell division and for the maintenance of normal septation. The polypeptide is Probable GTP-binding protein EngB (Vibrio vulnificus (strain YJ016)).